A 271-amino-acid polypeptide reads, in one-letter code: 3-methyl-2-oxobutanoate hydroxymethyltransferase (271 aa).

Mg(2+) is bound by residues Asp51 and Asp90. 3-methyl-2-oxobutanoate is bound by residues 51–52 (DS), Asp90, and Lys118. Mg(2+) is bound at residue Glu120. Catalysis depends on Glu186, which acts as the Proton acceptor.

This sequence belongs to the PanB family. As to quaternary structure, homodecamer; pentamer of dimers. The cofactor is Mg(2+).

Its subcellular location is the cytoplasm. The enzyme catalyses 3-methyl-2-oxobutanoate + (6R)-5,10-methylene-5,6,7,8-tetrahydrofolate + H2O = 2-dehydropantoate + (6S)-5,6,7,8-tetrahydrofolate. It participates in cofactor biosynthesis; (R)-pantothenate biosynthesis; (R)-pantoate from 3-methyl-2-oxobutanoate: step 1/2. Catalyzes the reversible reaction in which hydroxymethyl group from 5,10-methylenetetrahydrofolate is transferred onto alpha-ketoisovalerate to form ketopantoate. The sequence is that of 3-methyl-2-oxobutanoate hydroxymethyltransferase from Xanthomonas campestris pv. campestris (strain 8004).